A 571-amino-acid polypeptide reads, in one-letter code: Proline--tRNA ligase (571 aa).

This sequence belongs to the class-II aminoacyl-tRNA synthetase family. ProS type 1 subfamily. In terms of assembly, homodimer.

Its subcellular location is the cytoplasm. The enzyme catalyses tRNA(Pro) + L-proline + ATP = L-prolyl-tRNA(Pro) + AMP + diphosphate. Functionally, catalyzes the attachment of proline to tRNA(Pro) in a two-step reaction: proline is first activated by ATP to form Pro-AMP and then transferred to the acceptor end of tRNA(Pro). As ProRS can inadvertently accommodate and process non-cognate amino acids such as alanine and cysteine, to avoid such errors it has two additional distinct editing activities against alanine. One activity is designated as 'pretransfer' editing and involves the tRNA(Pro)-independent hydrolysis of activated Ala-AMP. The other activity is designated 'posttransfer' editing and involves deacylation of mischarged Ala-tRNA(Pro). The misacylated Cys-tRNA(Pro) is not edited by ProRS. The protein is Proline--tRNA ligase of Pseudomonas putida (strain ATCC 47054 / DSM 6125 / CFBP 8728 / NCIMB 11950 / KT2440).